We begin with the raw amino-acid sequence, 92 residues long: MSNRRSRQSSSAPRISDNQMIDLVSKLRQILPEIGQRRRSDKASASKVLQETCNYIRNLNREVDNLSERLSQLLESVDEDSPEAAVIRSLLM.

The 56-residue stretch at 4-59 (RRSRQSSSAPRISDNQMIDLVSKLRQILPEIGQRRRSDKASASKVLQETCNYIRNL) folds into the bHLH domain.

Interacts with IBH1 and HFR1. In terms of tissue distribution, expressed in roots, leaves, stems and flowers.

Its subcellular location is the nucleus. Atypical and probable non DNA-binding bHLH transcription factor that integrates multiple signaling pathways to regulate cell elongation and plant development. Binds IBH1, forming a pair of antagonistic bHLH transcription factors that function downstream of BZR1 to mediate brassinosteroid regulation of cell elongation. Regulates light responses by binding and inhibiting the activity of the bHLH transcription factor HFR1, a critical regulator of light signaling and shade avoidance. May have a regulatory role in various aspects of gibberellin-dependent growth and development. This Arabidopsis thaliana (Mouse-ear cress) protein is Transcription factor PRE1 (PRE1).